The following is a 407-amino-acid chain: Protoasukamycin 4-monooxygenase (407 aa).

As to quaternary structure, does not interact with AsuE2, suggesting a possible transient interaction between the two enzymes instead of formation of a stable complex. FMN is required as a cofactor. Requires FAD as cofactor. Riboflavin serves as cofactor.

It carries out the reaction protoasukamycin + NADH + O2 + H(+) = 4-hydroxyprotoasukamycin + NAD(+) + H2O. It participates in antibiotic biosynthesis. With respect to regulation, when flavin concentration is low, activity is enhanced by the presence of the NADH-dependent flavin reductase AsuE2. In the presence of abundant flavin, activity of AsuE1 is not affected by AsuE2. Functionally, involved in the biosynthesis of the antibiotic asukamycin. Catalyzes the conversion of protoasukamycin to 4-hydroxyprotoasukamycin. Can also convert some protoasukamycin derivatives into their corresponding 4-hydroxyprotoasukamycin derivatives. Can also use NADPH, but catalytic efficiency is 50-fold higher with NADH. This is Protoasukamycin 4-monooxygenase from Streptomyces nodosus subsp. asukaensis.